A 443-amino-acid polypeptide reads, in one-letter code: Amino-acid acetyltransferase (443 aa).

Positions 296-443 (EQIRRATIND…KSKVLMADLG (148 aa)) constitute an N-acetyltransferase domain.

It belongs to the acetyltransferase family. ArgA subfamily. In terms of assembly, homohexamer.

It localises to the cytoplasm. It catalyses the reaction L-glutamate + acetyl-CoA = N-acetyl-L-glutamate + CoA + H(+). The protein operates within amino-acid biosynthesis; L-arginine biosynthesis; N(2)-acetyl-L-ornithine from L-glutamate: step 1/4. This chain is Amino-acid acetyltransferase (argA), found in Escherichia coli O157:H7.